A 245-amino-acid polypeptide reads, in one-letter code: Leucyl/phenylalanyl-tRNA--protein transferase (245 aa).

Belongs to the L/F-transferase family.

It localises to the cytoplasm. It carries out the reaction N-terminal L-lysyl-[protein] + L-leucyl-tRNA(Leu) = N-terminal L-leucyl-L-lysyl-[protein] + tRNA(Leu) + H(+). The catalysed reaction is N-terminal L-arginyl-[protein] + L-leucyl-tRNA(Leu) = N-terminal L-leucyl-L-arginyl-[protein] + tRNA(Leu) + H(+). It catalyses the reaction L-phenylalanyl-tRNA(Phe) + an N-terminal L-alpha-aminoacyl-[protein] = an N-terminal L-phenylalanyl-L-alpha-aminoacyl-[protein] + tRNA(Phe). Functions in the N-end rule pathway of protein degradation where it conjugates Leu, Phe and, less efficiently, Met from aminoacyl-tRNAs to the N-termini of proteins containing an N-terminal arginine or lysine. This Paraburkholderia xenovorans (strain LB400) protein is Leucyl/phenylalanyl-tRNA--protein transferase.